Here is a 600-residue protein sequence, read N- to C-terminus: UvrABC system protein C (600 aa).

Residues 15–100 form the GIY-YIG domain; sequence NSTGVYQYFN…IKQLHPKYNI (86 aa). In terms of domain architecture, UVR spans 203-238; that stretch reads SVLLKNLEKQMLVLAQNENYEEAAKVRDQIAMIKDL.

It belongs to the UvrC family. As to quaternary structure, interacts with UvrB in an incision complex.

It localises to the cytoplasm. Functionally, the UvrABC repair system catalyzes the recognition and processing of DNA lesions. UvrC both incises the 5' and 3' sides of the lesion. The N-terminal half is responsible for the 3' incision and the C-terminal half is responsible for the 5' incision. The sequence is that of UvrABC system protein C from Campylobacter jejuni subsp. jejuni serotype O:2 (strain ATCC 700819 / NCTC 11168).